The primary structure comprises 1251 residues: Immunoglobulin-like and fibronectin type III domain-containing protein 1 (1251 aa).

Positions 29 to 119 constitute an Ig-like 1 domain; sequence PDFEQKPVTS…GEAACSVRLT (91 aa). The segment at 61-81 is disordered; sequence RWQNSKGDLSDSSKYKISSSP. Residues 188-221 are a coiled coil; the sequence is IVDYRGMLRRLQEMKKEQEDKMAQYINTISSLRH. One can recognise an Ig-like 2 domain in the interval 309–398; sequence PRVVVPLAET…SSAWLVVEAG (90 aa). Positions 403–433 are enriched in basic and acidic residues; sequence LQSTSADHKLQSRRSGKDGRLDIYGERRDAT. The disordered stretch occupies residues 403-454; it reads LQSTSADHKLQSRRSGKDGRLDIYGERRDATRSSTSRYKPGTGSFSKDAQGP. Residues 434 to 449 show a composition bias toward polar residues; the sequence is RSSTSRYKPGTGSFSK. The region spanning 454-539 is the Ig-like 3 domain; it reads PMGHFSQGLA…GDQQSEATLT (86 aa). Fibronectin type-III domains lie at 646 to 741, 746 to 845, and 847 to 942; these read PPQG…VAPE, APSA…MRPP, and LVRN…AMPV. The 85-residue stretch at 946–1030 folds into the Ig-like 4 domain; it reads PKFLVDSSTK…LRTLQGKEVA (85 aa). One can recognise a Fibronectin type-III 4 domain in the interval 1043 to 1137; sequence APGPIHLQEN…TSQPWCIPRQ (95 aa). The region spanning 1151–1245 is the Ig-like 5 domain; that stretch reads PDLSQKPRFL…GQAVSTATLI (95 aa).

Interacts with FLNC. Interacts with KY. In terms of tissue distribution, expressed in skeletal muscle.

The protein localises to the nucleus. The protein resides in the cytoplasm. Its subcellular location is the myofibril. It localises to the sarcomere. It is found in the z line. The protein is Immunoglobulin-like and fibronectin type III domain-containing protein 1 (IGFN1) of Homo sapiens (Human).